Consider the following 97-residue polypeptide: ATP-dependent Clp protease adapter protein ClpS (97 aa).

The protein belongs to the ClpS family. In terms of assembly, binds to the N-terminal domain of the chaperone ClpA.

Its function is as follows. Involved in the modulation of the specificity of the ClpAP-mediated ATP-dependent protein degradation. The polypeptide is ATP-dependent Clp protease adapter protein ClpS (Nautilia profundicola (strain ATCC BAA-1463 / DSM 18972 / AmH)).